A 414-amino-acid chain; its full sequence is TAR DNA-binding protein 43 (414 aa).

Residues lysine 79, lysine 84, lysine 95, lysine 102, and lysine 181 each participate in a glycyl lysine isopeptide (Lys-Gly) (interchain with G-Cter in SUMO2) cross-link. RRM domains follow at residues 104–200 (SDLI…RCTE) and 191–262 (RKVF…NAEP). Serine 183 carries the phosphoserine modification. Residues 216 to 414 (EVVDVFIPKP…MDSKSSGWGM (199 aa)) are interaction with UBQLN2. Residues 261–274 (EPKHNSNRQLERSG) show a composition bias toward basic and acidic residues. 2 disordered regions span residues 261-301 (EPKH…GLGN) and 341-414 (ASQQ…GWGM). A Glycyl lysine isopeptide (Lys-Gly) (interchain with G-Cter in SUMO2) cross-link involves residue lysine 263. Over residues 275-301 (RFGGNPGGFGNQGGFGNSRGGGAGLGN) the composition is skewed to gly residues. Serine 292 carries the phosphoserine modification. Arginine 293 carries the omega-N-methylarginine modification. Composition is skewed to low complexity over residues 342 to 358 (SQQN…SQGS) and 368 to 392 (GSGN…SNAG). Residues 393-402 (SGSGFNGGFG) are compositionally biased toward gly residues. Over residues 405 to 414 (MDSKSSGWGM) the composition is skewed to polar residues.

In terms of assembly, homodimer. Homooligomer (via its N-terminal domain). Interacts with BRDT. Binds specifically to pyrimidine-rich motifs of TAR DNA and to single stranded TG repeated sequences. Binds to RNA, specifically to UG repeated sequences with a minimum of six contiguous repeats. Interacts with ATXN2; the interaction is RNA-dependent. Interacts with MATR3. Interacts with UBQLN2. Interacts with HNRNPA2B1. Interacts with ZNF106. Interacts with CNOT7/CAF1. Interacts with CRY2. Interacts with PPIA/CYPA; the interaction is dependent on RNA-binding activity of TARDBP and PPIase activity of PPIA/CYPA. Acetylation of PPIA/CYPA at 'Lys-125' favors the interaction of TARDBP with PPIA/CYPA. Hyperphosphorylated. Post-translationally, ubiquitinated.

The protein resides in the nucleus. It is found in the cytoplasm. Its subcellular location is the stress granule. The protein localises to the mitochondrion. RNA-binding protein that is involved in various steps of RNA biogenesis and processing. Preferentially binds, via its two RNA recognition motifs RRM1 and RRM2, to GU-repeats on RNA molecules predominantly localized within long introns and in the 3'UTR of mRNAs. In turn, regulates the splicing of many non-coding and protein-coding RNAs including proteins involved in neuronal survival, as well as mRNAs that encode proteins relevant for neurodegenerative diseases. Plays a role in maintaining mitochondrial homeostasis by regulating the processing of mitochondrial transcripts. Also regulates mRNA stability by recruiting CNOT7/CAF1 deadenylase on mRNA 3'UTR leading to poly(A) tail deadenylation and thus shortening. In response to oxidative insult, associates with stalled ribosomes localized to stress granules (SGs) and contributes to cell survival. Also participates in the normal skeletal muscle formation and regeneration, forming cytoplasmic myo-granules and binding mRNAs that encode sarcomeric proteins. Plays a role in the maintenance of the circadian clock periodicity via stabilization of the CRY1 and CRY2 proteins in a FBXL3-dependent manner. Negatively regulates the expression of CDK6. Regulates the expression of HDAC6, ATG7 and VCP in a PPIA/CYPA-dependent manner. This Mus musculus (Mouse) protein is TAR DNA-binding protein 43 (Tardbp).